A 358-amino-acid chain; its full sequence is Alanine racemase (358 aa).

Lysine 34 (proton acceptor; specific for D-alanine) is an active-site residue. N6-(pyridoxal phosphate)lysine is present on lysine 34. Arginine 129 provides a ligand contact to substrate. Tyrosine 254 (proton acceptor; specific for L-alanine) is an active-site residue. Methionine 302 is a binding site for substrate.

Belongs to the alanine racemase family. Pyridoxal 5'-phosphate serves as cofactor.

It carries out the reaction L-alanine = D-alanine. It participates in amino-acid biosynthesis; D-alanine biosynthesis; D-alanine from L-alanine: step 1/1. Catalyzes the interconversion of L-alanine and D-alanine. May also act on other amino acids. This is Alanine racemase (alr) from Vibrio parahaemolyticus serotype O3:K6 (strain RIMD 2210633).